We begin with the raw amino-acid sequence, 246 residues long: 1-(5-phosphoribosyl)-5-[(5-phosphoribosylamino)methylideneamino] imidazole-4-carboxamide isomerase (246 aa).

Aspartate 7 acts as the Proton acceptor in catalysis. Catalysis depends on aspartate 129, which acts as the Proton donor.

It belongs to the HisA/HisF family.

It is found in the cytoplasm. The enzyme catalyses 1-(5-phospho-beta-D-ribosyl)-5-[(5-phospho-beta-D-ribosylamino)methylideneamino]imidazole-4-carboxamide = 5-[(5-phospho-1-deoxy-D-ribulos-1-ylimino)methylamino]-1-(5-phospho-beta-D-ribosyl)imidazole-4-carboxamide. The protein operates within amino-acid biosynthesis; L-histidine biosynthesis; L-histidine from 5-phospho-alpha-D-ribose 1-diphosphate: step 4/9. This is 1-(5-phosphoribosyl)-5-[(5-phosphoribosylamino)methylideneamino] imidazole-4-carboxamide isomerase from Buchnera aphidicola subsp. Acyrthosiphon pisum (strain 5A).